A 617-amino-acid chain; its full sequence is Dihydroxy-acid dehydratase (617 aa).

A Mg(2+)-binding site is contributed by aspartate 81. Cysteine 122 is a binding site for [2Fe-2S] cluster. The Mg(2+) site is built by aspartate 123 and lysine 124. Lysine 124 carries the post-translational modification N6-carboxylysine. [2Fe-2S] cluster is bound at residue cysteine 195. A Mg(2+)-binding site is contributed by glutamate 491. The active-site Proton acceptor is the serine 517.

It belongs to the IlvD/Edd family. In terms of assembly, homodimer. It depends on [2Fe-2S] cluster as a cofactor. Mg(2+) serves as cofactor.

It catalyses the reaction (2R)-2,3-dihydroxy-3-methylbutanoate = 3-methyl-2-oxobutanoate + H2O. It carries out the reaction (2R,3R)-2,3-dihydroxy-3-methylpentanoate = (S)-3-methyl-2-oxopentanoate + H2O. It participates in amino-acid biosynthesis; L-isoleucine biosynthesis; L-isoleucine from 2-oxobutanoate: step 3/4. It functions in the pathway amino-acid biosynthesis; L-valine biosynthesis; L-valine from pyruvate: step 3/4. Its function is as follows. Functions in the biosynthesis of branched-chain amino acids. Catalyzes the dehydration of (2R,3R)-2,3-dihydroxy-3-methylpentanoate (2,3-dihydroxy-3-methylvalerate) into 2-oxo-3-methylpentanoate (2-oxo-3-methylvalerate) and of (2R)-2,3-dihydroxy-3-methylbutanoate (2,3-dihydroxyisovalerate) into 2-oxo-3-methylbutanoate (2-oxoisovalerate), the penultimate precursor to L-isoleucine and L-valine, respectively. This Buchnera aphidicola subsp. Diuraphis noxia protein is Dihydroxy-acid dehydratase.